We begin with the raw amino-acid sequence, 946 residues long: Bifunctional glutamine synthetase adenylyltransferase/adenylyl-removing enzyme (946 aa).

Positions Met-1–Glu-440 are adenylyl removase. The segment at Ser-449–Glu-946 is adenylyl transferase.

The protein belongs to the GlnE family. The cofactor is Mg(2+).

The catalysed reaction is [glutamine synthetase]-O(4)-(5'-adenylyl)-L-tyrosine + phosphate = [glutamine synthetase]-L-tyrosine + ADP. The enzyme catalyses [glutamine synthetase]-L-tyrosine + ATP = [glutamine synthetase]-O(4)-(5'-adenylyl)-L-tyrosine + diphosphate. In terms of biological role, involved in the regulation of glutamine synthetase GlnA, a key enzyme in the process to assimilate ammonia. When cellular nitrogen levels are high, the C-terminal adenylyl transferase (AT) inactivates GlnA by covalent transfer of an adenylyl group from ATP to specific tyrosine residue of GlnA, thus reducing its activity. Conversely, when nitrogen levels are low, the N-terminal adenylyl removase (AR) activates GlnA by removing the adenylyl group by phosphorolysis, increasing its activity. The regulatory region of GlnE binds the signal transduction protein PII (GlnB) which indicates the nitrogen status of the cell. This Shigella sonnei (strain Ss046) protein is Bifunctional glutamine synthetase adenylyltransferase/adenylyl-removing enzyme.